A 393-amino-acid polypeptide reads, in one-letter code: MNLNKNLPTGTRDKLFREARAAYKIEQQVNHYFEKRGFKRIETPVIEFEDVFSSEHQADAKLYRFFDEKGRLTVLRPDMTLPIGRVVSTTGVMLPLKLSYSGKIFRANEDFGGEQNEQTQAGIEIIGYPSIKAEIECILIGIGVLNALEIPNFQIELGHAAIYRRVTNLLNLSETAEIDFRLLIQNKSLTGIKRFVADNPSTLDDFILALPRLFGPATAILKQAKNLTTDKGILTALREMETIVEAVSYTADISVDLGLVQDFHYYTGIIFRGYADLAADNFLSGGRYDHLLEQFTSASSPAVGLALNLDSLTTLQNRAGVIKKQVSTSLLIHYDLDAIQQAEKLMQETPNSELSFFETPTNAISFAKKWHIPAVIHVSRQGIQTIFQREADL.

This sequence belongs to the class-II aminoacyl-tRNA synthetase family. HisZ subfamily. As to quaternary structure, heteromultimer composed of HisG and HisZ subunits.

It localises to the cytoplasm. It participates in amino-acid biosynthesis; L-histidine biosynthesis; L-histidine from 5-phospho-alpha-D-ribose 1-diphosphate: step 1/9. Its function is as follows. Required for the first step of histidine biosynthesis. May allow the feedback regulation of ATP phosphoribosyltransferase activity by histidine. In Listeria monocytogenes serovar 1/2a (strain ATCC BAA-679 / EGD-e), this protein is ATP phosphoribosyltransferase regulatory subunit (hisZ).